A 321-amino-acid polypeptide reads, in one-letter code: Serine/threonine-protein phosphatase PP1 (321 aa).

Residues Asp-60, His-62, Asp-88, and Asn-120 each contribute to the Mn(2+) site. Catalysis depends on His-121, which acts as the Proton donor. Residues His-169 and His-244 each coordinate Mn(2+). Positions 298 to 321 are disordered; the sequence is KKLTNDSNGRPLTPPRNKQQKPKK.

This sequence belongs to the PPP phosphatase family. As to quaternary structure, interacts with dpiA. Requires Mn(2+) as cofactor.

The enzyme catalyses O-phospho-L-seryl-[protein] + H2O = L-seryl-[protein] + phosphate. The catalysed reaction is O-phospho-L-threonyl-[protein] + H2O = L-threonyl-[protein] + phosphate. Its activity is regulated as follows. Inhibited by okadaic acid, tautomycin and calyculin A. Inhibited by phosphatase inhibitor 2 (dpiA). In terms of biological role, protein phosphatase activity in vitro. This chain is Serine/threonine-protein phosphatase PP1 (pppB), found in Dictyostelium discoideum (Social amoeba).